Consider the following 463-residue polypeptide: Bifunctional protein GlmU (463 aa).

The tract at residues 1 to 228 (MEQALSIVVL…PAEVQGVNDR (228 aa)) is pyrophosphorylase. UDP-N-acetyl-alpha-D-glucosamine contacts are provided by residues 10–13 (LAAG), lysine 24, glutamine 75, 80–81 (GT), 102–104 (YGD), glycine 138, glutamate 153, asparagine 168, and asparagine 226. Aspartate 104 contributes to the Mg(2+) binding site. Asparagine 226 provides a ligand contact to Mg(2+). The segment at 229–249 (VQLAAAERVWQRRQAEDWMRA) is linker. Positions 250–463 (GVTILDPDRF…RPDRGEGSDA (214 aa)) are N-acetyltransferase. Arginine 332 and lysine 350 together coordinate UDP-N-acetyl-alpha-D-glucosamine. Histidine 362 functions as the Proton acceptor in the catalytic mechanism. UDP-N-acetyl-alpha-D-glucosamine contacts are provided by tyrosine 365 and asparagine 376. Residues alanine 379, 385 to 386 (NY), serine 404, alanine 422, and arginine 439 contribute to the acetyl-CoA site. Positions 437–463 (VARSAQRSIHGWRRPGQRPDRGEGSDA) are disordered. A compositionally biased stretch (basic and acidic residues) spans 453–463 (QRPDRGEGSDA).

This sequence in the N-terminal section; belongs to the N-acetylglucosamine-1-phosphate uridyltransferase family. In the C-terminal section; belongs to the transferase hexapeptide repeat family. Homotrimer. Requires Mg(2+) as cofactor.

It localises to the cytoplasm. The enzyme catalyses alpha-D-glucosamine 1-phosphate + acetyl-CoA = N-acetyl-alpha-D-glucosamine 1-phosphate + CoA + H(+). The catalysed reaction is N-acetyl-alpha-D-glucosamine 1-phosphate + UTP + H(+) = UDP-N-acetyl-alpha-D-glucosamine + diphosphate. It functions in the pathway nucleotide-sugar biosynthesis; UDP-N-acetyl-alpha-D-glucosamine biosynthesis; N-acetyl-alpha-D-glucosamine 1-phosphate from alpha-D-glucosamine 6-phosphate (route II): step 2/2. Its pathway is nucleotide-sugar biosynthesis; UDP-N-acetyl-alpha-D-glucosamine biosynthesis; UDP-N-acetyl-alpha-D-glucosamine from N-acetyl-alpha-D-glucosamine 1-phosphate: step 1/1. The protein operates within bacterial outer membrane biogenesis; LPS lipid A biosynthesis. Catalyzes the last two sequential reactions in the de novo biosynthetic pathway for UDP-N-acetylglucosamine (UDP-GlcNAc). The C-terminal domain catalyzes the transfer of acetyl group from acetyl coenzyme A to glucosamine-1-phosphate (GlcN-1-P) to produce N-acetylglucosamine-1-phosphate (GlcNAc-1-P), which is converted into UDP-GlcNAc by the transfer of uridine 5-monophosphate (from uridine 5-triphosphate), a reaction catalyzed by the N-terminal domain. This Alkalilimnicola ehrlichii (strain ATCC BAA-1101 / DSM 17681 / MLHE-1) protein is Bifunctional protein GlmU.